Here is a 429-residue protein sequence, read N- to C-terminus: Enolase (429 aa).

Residue Gln163 participates in (2R)-2-phosphoglycerate binding. Glu205 acts as the Proton donor in catalysis. The Mg(2+) site is built by Asp242, Glu287, and Asp314. Residues Lys339, Arg368, Ser369, and Lys390 each coordinate (2R)-2-phosphoglycerate. Lys339 (proton acceptor) is an active-site residue.

This sequence belongs to the enolase family. As to quaternary structure, homooctamer. Mg(2+) serves as cofactor.

The protein resides in the cytoplasm. It localises to the secreted. Its subcellular location is the cell surface. It catalyses the reaction (2R)-2-phosphoglycerate = phosphoenolpyruvate + H2O. Its pathway is carbohydrate degradation; glycolysis; pyruvate from D-glyceraldehyde 3-phosphate: step 4/5. Its function is as follows. Catalyzes the reversible conversion of 2-phosphoglycerate (2-PG) into phosphoenolpyruvate (PEP). It is essential for the degradation of carbohydrates via glycolysis. This is Enolase from Zymomonas mobilis subsp. mobilis (strain ATCC 31821 / ZM4 / CP4).